The sequence spans 66 residues: ATP synthase F(0) complex subunit 8 (66 aa).

A helical membrane pass occupies residues 8-24 (TWLTMILSMFLVLFIIF). An N6-acetyllysine; alternate modification is found at Lys-54. Position 54 is an N6-succinyllysine; alternate (Lys-54). The residue at position 57 (Lys-57) is an N6-acetyllysine.

It belongs to the ATPase protein 8 family. As to quaternary structure, component of the ATP synthase complex composed at least of ATP5F1A/subunit alpha, ATP5F1B/subunit beta, ATP5MC1/subunit c (homooctomer), MT-ATP6/subunit a, MT-ATP8/subunit 8, ATP5ME/subunit e, ATP5MF/subunit f, ATP5MG/subunit g, ATP5MK/subunit k, ATP5MJ/subunit j, ATP5F1C/subunit gamma, ATP5F1D/subunit delta, ATP5F1E/subunit epsilon, ATP5PF/subunit F6, ATP5PB/subunit b, ATP5PD/subunit d, ATP5PO/subunit OSCP. ATP synthase complex consists of a soluble F(1) head domain (subunits alpha(3) and beta(3)) - the catalytic core - and a membrane F(0) domain - the membrane proton channel (subunits c, a, 8, e, f, g, k and j). These two domains are linked by a central stalk (subunits gamma, delta, and epsilon) rotating inside the F1 region and a stationary peripheral stalk (subunits F6, b, d, and OSCP). Interacts with PRICKLE3.

Its subcellular location is the mitochondrion membrane. Subunit 8, of the mitochondrial membrane ATP synthase complex (F(1)F(0) ATP synthase or Complex V) that produces ATP from ADP in the presence of a proton gradient across the membrane which is generated by electron transport complexes of the respiratory chain. ATP synthase complex consist of a soluble F(1) head domain - the catalytic core - and a membrane F(1) domain - the membrane proton channel. These two domains are linked by a central stalk rotating inside the F(1) region and a stationary peripheral stalk. During catalysis, ATP synthesis in the catalytic domain of F(1) is coupled via a rotary mechanism of the central stalk subunits to proton translocation. In vivo, can only synthesize ATP although its ATP hydrolase activity can be activated artificially in vitro. Part of the complex F(0) domain. This chain is ATP synthase F(0) complex subunit 8, found in Ovis aries (Sheep).